Reading from the N-terminus, the 273-residue chain is Thioredoxin-like 1-3, chloroplastic (273 aa).

The transit peptide at 1–44 (MATDSFIKLNPISFNRARFDLRDFAGISPKSISSLCCISPRLIS) directs the protein to the chloroplast. A Thioredoxin domain is found at 62-202 (LFSKKKIPAF…FKEALEKHGR (141 aa)). Active-site nucleophile residues include C125 and C128. The cysteines at positions 125 and 128 are disulfide-linked.

The protein belongs to the thioredoxin family.

Its subcellular location is the plastid. It is found in the chloroplast. Functionally, probable thiol-disulfide oxidoreductase that may participate in various redox reactions. The polypeptide is Thioredoxin-like 1-3, chloroplastic (Arabidopsis thaliana (Mouse-ear cress)).